A 408-amino-acid chain; its full sequence is MADIRWDALWTHVHLATLAADADGYGEIRDGAIAVRDGRIAWLGARADLPAGARAEREHDGGGAWLTPGLIDCHTHLVHAGNRSNEFEARLNGVPYEHIARAGGGILSTVRATRAASEDALAQASLPRLNALRAEGVTTVEIKSGYGLDLETERRMLRVARRFGQTLRVRVRTTFLGAHAVPPEFAGRADDYIGHLCADVLPALAAEGLVDAVDAFCETIGFSPAQTARMFDAAQALGLPVKLHAEQLSDQGGAALVARYGGLSADHLECLTDAGVAAMAEAGTVAVLLPGAFYCLRETRLPPLQALRQAGVPMAVSTDCNPGTSPLSSLLLAMNMACTLFRLTPLEALTGATRHAAAALGLAGTCGVLAPGCVADFALWRIDRPADLAYAMGLNPCAGVVKDGAPAR.

His74 and His76 together coordinate Fe(3+). Zn(2+) is bound by residues His74 and His76. Residues Arg83, Tyr146, and His179 each coordinate 4-imidazolone-5-propanoate. An N-formimidoyl-L-glutamate-binding site is contributed by Tyr146. Fe(3+) is bound at residue His244. His244 contributes to the Zn(2+) binding site. Residue Gln247 participates in 4-imidazolone-5-propanoate binding. A Fe(3+)-binding site is contributed by Asp319. Asp319 is a binding site for Zn(2+). Asn321 and Gly323 together coordinate N-formimidoyl-L-glutamate. Thr324 lines the 4-imidazolone-5-propanoate pocket.

This sequence belongs to the metallo-dependent hydrolases superfamily. HutI family. Zn(2+) is required as a cofactor. The cofactor is Fe(3+).

It is found in the cytoplasm. It catalyses the reaction 4-imidazolone-5-propanoate + H2O = N-formimidoyl-L-glutamate. It participates in amino-acid degradation; L-histidine degradation into L-glutamate; N-formimidoyl-L-glutamate from L-histidine: step 3/3. Catalyzes the hydrolytic cleavage of the carbon-nitrogen bond in imidazolone-5-propanoate to yield N-formimidoyl-L-glutamate. It is the third step in the universal histidine degradation pathway. The polypeptide is Imidazolonepropionase (Ralstonia nicotianae (strain ATCC BAA-1114 / GMI1000) (Ralstonia solanacearum)).